Reading from the N-terminus, the 41-residue chain is Large ribosomal subunit protein bL36 (41 aa).

The protein belongs to the bacterial ribosomal protein bL36 family.

This is Large ribosomal subunit protein bL36 from Sinorhizobium medicae (strain WSM419) (Ensifer medicae).